The following is a 284-amino-acid chain: D-tagatose-1,6-bisphosphate aldolase subunit GatY (284 aa).

Aspartate 82 functions as the Proton donor in the catalytic mechanism. Residues histidine 83 and histidine 180 each contribute to the Zn(2+) site. Residue glycine 181 coordinates dihydroxyacetone phosphate. Histidine 208 contributes to the Zn(2+) binding site. Residues 209–211 (GAS) and 230–233 (NVAT) each bind dihydroxyacetone phosphate.

This sequence belongs to the class II fructose-bisphosphate aldolase family. TagBP aldolase GatY subfamily. As to quaternary structure, forms a complex with GatZ. Requires Zn(2+) as cofactor.

The catalysed reaction is D-tagatofuranose 1,6-bisphosphate = D-glyceraldehyde 3-phosphate + dihydroxyacetone phosphate. Its pathway is carbohydrate metabolism; D-tagatose 6-phosphate degradation; D-glyceraldehyde 3-phosphate and glycerone phosphate from D-tagatose 6-phosphate: step 2/2. Its function is as follows. Catalytic subunit of the tagatose-1,6-bisphosphate aldolase GatYZ, which catalyzes the reversible aldol condensation of dihydroxyacetone phosphate (DHAP or glycerone-phosphate) with glyceraldehyde 3-phosphate (G3P) to produce tagatose 1,6-bisphosphate (TBP). Requires GatZ subunit for full activity and stability. Is involved in the catabolism of galactitol. This Shigella flexneri serotype 5b (strain 8401) protein is D-tagatose-1,6-bisphosphate aldolase subunit GatY.